A 128-amino-acid chain; its full sequence is MEIGKKYELNPHRIKSFIDISSSNASMVGIIQENGGWFEVKSISSLDGFDYVTEIICANGEIYNDDGMGDDYFELSEEEFYCFREYKEPTSEEDEVKDKVSGVTKIHCIVDENNVDEIIELLRKTFKK.

This is an uncharacterized protein from Escherichia coli (Bacteriophage T4).